Reading from the N-terminus, the 300-residue chain is MTPSALFHKRLIEQFTIFLSVDRGISPLSVQAYCQDVLLFLQRASIEATDRINQESVFLFVEKCHKAKESETTLARRLIALKVFFHFLKDAKMLDQQPFIEHPKIWKRLPSILSTEEVNSLLDQPLNIPNLDTHIASRDAAILYTFYATGIRVSELCDLCIGDISDDFIRVTGKGRKTRLVPISIKAKQAIDAYLSSFRDELQKKNPSEEHVFLSIRGKKLDRSCVWKRITFYAKLVTTKRISPHSLRHAFATHLLNNHADLRIIQEMLGHSRISSTEIYTHVASESLIEKFHTYHPRDI.

The Core-binding (CB) domain maps to 6–89; sequence LFHKRLIEQF…ALKVFFHFLK (84 aa). The region spanning 108-293 is the Tyr recombinase domain; sequence RLPSILSTEE…ASESLIEKFH (186 aa). Residues Arg152, Lys174, His245, Arg248, and His271 contribute to the active site. Tyr280 (O-(3'-phospho-DNA)-tyrosine intermediate) is an active-site residue.

Belongs to the 'phage' integrase family. XerD subfamily. As to quaternary structure, forms a cyclic heterotetrameric complex composed of two molecules of XerC and two molecules of XerD.

It is found in the cytoplasm. Site-specific tyrosine recombinase, which acts by catalyzing the cutting and rejoining of the recombining DNA molecules. The XerC-XerD complex is essential to convert dimers of the bacterial chromosome into monomers to permit their segregation at cell division. It also contributes to the segregational stability of plasmids. The protein is Tyrosine recombinase XerD of Chlamydia trachomatis serovar D (strain ATCC VR-885 / DSM 19411 / UW-3/Cx).